The primary structure comprises 463 residues: Siroheme synthase (463 aa).

The segment at 1–203 (MDYLPLFHKL…GQGAEAERLL (203 aa)) is precorrin-2 dehydrogenase /sirohydrochlorin ferrochelatase. NAD(+)-binding positions include 22 to 23 (EI) and 43 to 44 (PD). At Ser-128 the chain carries Phosphoserine. The interval 216–463 (GEVYLVGAGP…LAWFEGSQNS (248 aa)) is uroporphyrinogen-III C-methyltransferase. An S-adenosyl-L-methionine-binding site is contributed by Pro-225. Catalysis depends on Asp-248, which acts as the Proton acceptor. Residue Lys-270 is the Proton donor of the active site. S-adenosyl-L-methionine is bound by residues 301–303 (GGD), Ile-306, 331–332 (TA), Met-383, and Gly-412.

It in the N-terminal section; belongs to the precorrin-2 dehydrogenase / sirohydrochlorin ferrochelatase family. The protein in the C-terminal section; belongs to the precorrin methyltransferase family.

The catalysed reaction is uroporphyrinogen III + 2 S-adenosyl-L-methionine = precorrin-2 + 2 S-adenosyl-L-homocysteine + H(+). It carries out the reaction precorrin-2 + NAD(+) = sirohydrochlorin + NADH + 2 H(+). It catalyses the reaction siroheme + 2 H(+) = sirohydrochlorin + Fe(2+). It functions in the pathway cofactor biosynthesis; adenosylcobalamin biosynthesis; precorrin-2 from uroporphyrinogen III: step 1/1. Its pathway is cofactor biosynthesis; adenosylcobalamin biosynthesis; sirohydrochlorin from precorrin-2: step 1/1. It participates in porphyrin-containing compound metabolism; siroheme biosynthesis; precorrin-2 from uroporphyrinogen III: step 1/1. The protein operates within porphyrin-containing compound metabolism; siroheme biosynthesis; siroheme from sirohydrochlorin: step 1/1. It functions in the pathway porphyrin-containing compound metabolism; siroheme biosynthesis; sirohydrochlorin from precorrin-2: step 1/1. In terms of biological role, multifunctional enzyme that catalyzes the SAM-dependent methylations of uroporphyrinogen III at position C-2 and C-7 to form precorrin-2 via precorrin-1. Then it catalyzes the NAD-dependent ring dehydrogenation of precorrin-2 to yield sirohydrochlorin. Finally, it catalyzes the ferrochelation of sirohydrochlorin to yield siroheme. The protein is Siroheme synthase of Pseudomonas putida (strain ATCC 700007 / DSM 6899 / JCM 31910 / BCRC 17059 / LMG 24140 / F1).